A 199-amino-acid chain; its full sequence is Probable thymidylate kinase (199 aa).

9–16 (GIDGCGKT) serves as a coordination point for ATP.

This sequence belongs to the thymidylate kinase family.

The catalysed reaction is dTMP + ATP = dTDP + ADP. In Methanococcus maripaludis (strain C7 / ATCC BAA-1331), this protein is Probable thymidylate kinase.